A 338-amino-acid polypeptide reads, in one-letter code: tRNA-specific 2-thiouridylase MnmA (338 aa).

Residues 6–13 and methionine 32 each bind ATP; that span reads LMSGGIDS. Residue cysteine 87 is the Nucleophile of the active site. Cysteine 87 and cysteine 185 are joined by a disulfide. Glycine 111 serves as a coordination point for ATP. The interval 135–137 is interaction with tRNA; it reads KDQ. Cysteine 185 acts as the Cysteine persulfide intermediate in catalysis. Residues 288–289 are interaction with tRNA; that stretch reads RY.

The protein belongs to the MnmA/TRMU family.

It localises to the cytoplasm. The enzyme catalyses S-sulfanyl-L-cysteinyl-[protein] + uridine(34) in tRNA + AH2 + ATP = 2-thiouridine(34) in tRNA + L-cysteinyl-[protein] + A + AMP + diphosphate + H(+). Catalyzes the 2-thiolation of uridine at the wobble position (U34) of tRNA, leading to the formation of s(2)U34. The protein is tRNA-specific 2-thiouridylase MnmA of Syntrophomonas wolfei subsp. wolfei (strain DSM 2245B / Goettingen).